Here is a 186-residue protein sequence, read N- to C-terminus: UPF0301 protein Saro_0683 (186 aa).

This sequence belongs to the UPF0301 (AlgH) family.

The polypeptide is UPF0301 protein Saro_0683 (Novosphingobium aromaticivorans (strain ATCC 700278 / DSM 12444 / CCUG 56034 / CIP 105152 / NBRC 16084 / F199)).